A 922-amino-acid chain; its full sequence is Periodic tryptophan protein 2 homolog (922 aa).

14 WD repeats span residues 12-52, 53-92, 94-132, 141-180, 182-221, 271-310, 313-353, 356-395, 398-439, 443-485, 486-525, 528-567, 590-629, and 691-731; these read GTVY…TLPI, QSKY…VLGE, KFFK…KQPN, THKS…VSYF, VKGS…EMEQ, GVKC…QLYK, ISSH…YILK, GHSY…CYIT, EHEG…NFRT, PNKT…DILS, GHQS…EIRE, QHTS…QIGL, SAGR…LIKK, and KKKQ…DPTD. Residues 893-922 are disordered; it reads ESKKNKEQEEDQFSDDEETVYQNNKKNKNK. The segment covering 900 to 911 has biased composition (acidic residues); the sequence is QEEDQFSDDEET.

It belongs to the WD repeat PWP2 family. Part of the small subunit (SSU) processome, composed of more than 70 proteins and the RNA chaperone small nucleolar RNA (snoRNA) U3.

It is found in the nucleus. Its subcellular location is the nucleolus. Functionally, part of the small subunit (SSU) processome, first precursor of the small eukaryotic ribosomal subunit. During the assembly of the SSU processome in the nucleolus, many ribosome biogenesis factors, an RNA chaperone and ribosomal proteins associate with the nascent pre-rRNA and work in concert to generate RNA folding, modifications, rearrangements and cleavage as well as targeted degradation of pre-ribosomal RNA by the RNA exosome. The protein is Periodic tryptophan protein 2 homolog (pwp2) of Dictyostelium discoideum (Social amoeba).